Consider the following 721-residue polypeptide: Polyribonucleotide nucleotidyltransferase (721 aa).

Positions 495 and 501 each coordinate Mg(2+). A KH domain is found at 562–621 (PRLLSFRIDPELIGTVIGPGGRTIKGITERTNTKIDIEDGGIVTIASHDGAAAEEAQKII). The 69-residue stretch at 631 to 699 (GEVFSGSITR…NRGRINLTLR (69 aa)) folds into the S1 motif domain.

It belongs to the polyribonucleotide nucleotidyltransferase family. It depends on Mg(2+) as a cofactor.

The protein resides in the cytoplasm. It catalyses the reaction RNA(n+1) + phosphate = RNA(n) + a ribonucleoside 5'-diphosphate. Functionally, involved in mRNA degradation. Catalyzes the phosphorolysis of single-stranded polyribonucleotides processively in the 3'- to 5'-direction. In Synechococcus sp. (strain CC9605), this protein is Polyribonucleotide nucleotidyltransferase.